We begin with the raw amino-acid sequence, 431 residues long: Ammonium transporter 3 (431 aa).

Over 1–27 (MEQFSTSSSESSDSSSEYSLEFYMDTS) the chain is Extracellular. The chain crosses the membrane as a helical span at residues 28 to 48 (WVLDAANLVFFMQAGFGMLEA). Over 49–63 (GMVRAKNTKSILLKN) the chain is Cytoplasmic. A helical transmembrane segment spans residues 64–84 (LINTAICAISYYCVGHSFAYG). The Extracellular segment spans residues 85-102 (KVNPNSFVGFGNFFLMDY). The chain crosses the membrane as a helical span at residues 103-125 (THYAYWMIQWAYAATATTIATGA). At 126–134 (MAERLQLHC) the chain is on the cytoplasmic side. A helical transmembrane segment spans residues 135–155 (YILFTLVQTILIYPFVAHWIW). Residues 156–160 (SQNGW) are Extracellular-facing. The chain crosses the membrane as a helical span at residues 161–181 (LFDLGIVDFAGGAVIHIVAGI). Topologically, residues 182–211 (TGACGSFLLGPRIGRFNQESGKPKNLPGHS) are cytoplasmic. A helical membrane pass occupies residues 212 to 232 (VVLMSLGAMILWYSWYGYTAG). The Extracellular portion of the chain corresponds to 233 to 249 (ASLGMTRSRVLPASRVS). The chain crosses the membrane as a helical span at residues 250–270 (VVVTLSGATGLITVLGIGKIF). Topologically, residues 271–300 (NGHYDLVKGINGLIAGLVSSTSSCAYIEPW) are cytoplasmic. The chain crosses the membrane as a helical span at residues 301-321 (AAIIIGFIGGIVYWFSSWALL). Residues 322-333 (NWLRLDDPVDST) lie on the Extracellular side of the membrane. Residues 334 to 354 (AIHLFGGCWSLISVAFFATHG) form a helical membrane-spanning segment. Residues 355–357 (RVR) are Cytoplasmic-facing. Residues 358–378 (NPDIILPGGIFYGGGISLLWV) form a helical membrane-spanning segment. Position 379 (Gln379) is a topological domain, extracellular. A helical membrane pass occupies residues 380-400 (LVGMVLAILWAGFLSGIFFFT). Residues 401–431 (MDYFGKLRVDVDTELAGLDNSNHGGSAYIFD) lie on the Cytoplasmic side of the membrane.

This sequence belongs to the ammonia transporter channel (TC 1.A.11.2) family.

Its subcellular location is the cell membrane. The protein resides in the endosome membrane. It localises to the cytoplasmic vesicle. It is found in the phagosome membrane. In terms of biological role, ammonium transporter that mediates the import of ammonium in prespore cells. Controls ammonium homeostasis during growth and development. Ammonium has been shown to function as a morphogen at multiple steps during the development. May function as an ammonia sensor that relays information concerning ammonia concentrations to the signaling pathway involved in the slug versus culmination choice and regulates prestalk gene expression. The polypeptide is Ammonium transporter 3 (amtC) (Dictyostelium discoideum (Social amoeba)).